The following is a 1722-amino-acid chain: Signal-induced proliferation-associated 1-like protein 2 (1722 aa).

Basic and acidic residues predominate over residues 1 to 12 (MSDPRQSQEEKH). Disordered stretches follow at residues 1 to 29 (MSDP…RIMQ) and 42 to 72 (NGNM…PAVP). Polar residues predominate over residues 45–56 (MGPTTSLNASNS). Serine 148 is modified (phosphoserine). Positions 360–377 (GASAASQTQMPTGQTGNC) are enriched in polar residues. The tract at residues 360 to 401 (GASAASQTQMPTGQTGNCESPLGSKEDLNSKENLDADEGDGK) is disordered. A phosphoserine mark is found at serine 379 and serine 383. Residues 383 to 401 (SKEDLNSKENLDADEGDGK) are compositionally biased toward basic and acidic residues. The 218-residue stretch at 595–812 (LLKLDEQGLS…RTRQEYLKDL (218 aa)) folds into the Rap-GAP domain. Positions 950–1026 (EMTLRRNGLG…VKVVIIQPHD (77 aa)) constitute a PDZ domain. Residue serine 1029 is modified to Phosphoserine. Disordered stretches follow at residues 1067-1245 (HRVP…FGSG) and 1330-1360 (EGSM…SKSS). 2 stretches are compositionally biased toward low complexity: residues 1093-1102 (QQLLQQAQAA) and 1119-1130 (SSPSNQSSSSDP). Composition is skewed to basic and acidic residues over residues 1164 to 1183 (DGAR…ETKW) and 1194 to 1217 (YKER…HIGD). Over residues 1219 to 1236 (SCSSHSSSNTLSSNTSSN) the composition is skewed to low complexity. Serine 1244 carries the post-translational modification Phosphoserine. A compositionally biased stretch (low complexity) spans 1337 to 1360 (SEISSHSSGSHHSGSPSAHCSKSS). 7 positions are modified to phosphoserine: serine 1461, serine 1472, serine 1478, serine 1488, serine 1549, serine 1552, and serine 1591. Positions 1654-1712 (LTGKVNQLELILRQLQTDLRKEKQDKAVLQAEVQHLRQDNMRLQEESQTATAQLRKFTE) form a coiled coil.

This chain is Signal-induced proliferation-associated 1-like protein 2 (SIPA1L2), found in Homo sapiens (Human).